Consider the following 690-residue polypeptide: Translation initiation factor IF-2 (690 aa).

Residues 178 to 346 form the tr-type G domain; that stretch reads PRPPVVTVMG…MILLVAEMNE (169 aa). The tract at residues 187–194 is G1; the sequence is GHVDHGKT. Residue 187–194 coordinates GTP; sequence GHVDHGKT. A G2 region spans residues 212-216; that stretch reads GITQS. The G3 stretch occupies residues 233–236; sequence DTPG. GTP-binding positions include 233–237 and 287–290; these read DTPGH and NKID. The G4 stretch occupies residues 287-290; that stretch reads NKID. The G5 stretch occupies residues 324–326; the sequence is SAR.

The protein belongs to the TRAFAC class translation factor GTPase superfamily. Classic translation factor GTPase family. IF-2 subfamily.

The protein resides in the cytoplasm. Functionally, one of the essential components for the initiation of protein synthesis. Protects formylmethionyl-tRNA from spontaneous hydrolysis and promotes its binding to the 30S ribosomal subunits. Also involved in the hydrolysis of GTP during the formation of the 70S ribosomal complex. The protein is Translation initiation factor IF-2 of Thermotoga sp. (strain RQ2).